Here is a 2302-residue protein sequence, read N- to C-terminus: Phosphatidylinositol phosphatase PTPRQ (2302 aa).

Positions 1 to 18 (MMDFHFSFLFLLIGTSES) are cleaved as a signal peptide. Over 19 to 1908 (QVDVSSSFDG…GEGLSERTVE (1890 aa)) the chain is Extracellular. N54 is a glycosylation site (N-linked (GlcNAc...) asparagine). Fibronectin type-III domains follow at residues 60-155 (PPVF…TAES), 159-254 (KVVN…SSST), 310-398 (PPQN…PPDV), 401-501 (AVFD…PHND), 474-566 (GFYE…TVRT), 570-665 (VPSS…TPED), 670-759 (SPQD…TSET), 764-854 (APEN…TEED), 859-948 (PPQN…TPEG), 953-1053 (PPND…TDQD), 1058-1151 (PVGN…TEED), 1156-1243 (PPII…TDES), 1248-1341 (PPQN…TQES), 1345-1431 (AVRN…LPET), 1435-1539 (APTN…TLPG), 1544-1642 (PPEN…TLES), and 1647-1748 (PPNN…IKAP). N-linked (GlcNAc...) asparagine glycosylation is found at N162, N169, N318, N354, and N389. N733 and N746 each carry an N-linked (GlcNAc...) asparagine glycan. N904, N998, N1010, and N1040 each carry an N-linked (GlcNAc...) asparagine glycan. Residues N1251 and N1256 are each glycosylated (N-linked (GlcNAc...) asparagine). The N-linked (GlcNAc...) asparagine glycan is linked to N1805. Residues 1909 to 1929 (IILSVTLCILSIILLGTAIFA) form a helical membrane-spanning segment. Residues 1930–2302 (FVRIRQKQKE…VELEWEETTM (373 aa)) are Cytoplasmic-facing. Residues 2006 to 2262 (FQEEFSELPK…IFLHQCILDL (257 aa)) form the Tyrosine-protein phosphatase domain. The active-site Phosphocysteine intermediate is the C2203.

The protein belongs to the protein-tyrosine phosphatase family. Receptor class 2A subfamily. Interacts with TPRN. TPRN, CLIC5 and PTPQR form concentric rings at the base of stereocilia and may form a complex.

The protein localises to the cell projection. The protein resides in the stereocilium. It is found in the apical cell membrane. Its subcellular location is the basal cell membrane. It catalyses the reaction a 1,2-diacyl-sn-glycero-3-phospho-(1D-myo-inositol-3,4,5-trisphosphate) + H2O = a 1,2-diacyl-sn-glycero-3-phospho-(1D-myo-inositol-4,5-bisphosphate) + phosphate. The catalysed reaction is a 1,2-diacyl-sn-glycero-3-phospho-(1D-myo-inositol-3,4,5-trisphosphate) + H2O = a 1,2-diacyl-sn-glycero-3-phospho-(1D-myo-inositol-3,4-bisphosphate) + phosphate. The enzyme catalyses a 1,2-diacyl-sn-glycero-3-phospho-(1D-myo-inositol-3,5-bisphosphate) + H2O = a 1,2-diacyl-sn-glycero-3-phospho-(1D-myo-inositol-5-phosphate) + phosphate. It carries out the reaction a 1,2-diacyl-sn-glycero-3-phospho-(1D-myo-inositol-3,5-bisphosphate) + H2O = a 1,2-diacyl-sn-glycero-3-phospho-(1D-myo-inositol-3-phosphate) + phosphate. It catalyses the reaction a 1,2-diacyl-sn-glycero-3-phospho-(1D-myo-inositol-4,5-bisphosphate) + H2O = a 1,2-diacyl-sn-glycero-3-phospho-(1D-myo-inositol 4-phosphate) + phosphate. Its function is as follows. Dephosphorylates phosphatidylinositol phosphates, such as phosphatidylinositol 3,4,5-trisphosphate (PIP3) and phosphatidylinositol 3,5-diphosphates, with preference for PIP3. Phosphate can be hydrolyzed from the D3 and D5 positions in the inositol ring. Has low tyrosine-protein phosphatase activity in vitro; however, the relevance of such activity in vivo is unclear. Plays an important role in adipogenesis of mesenchymal stem cells (MSCs). Regulates the phosphorylation state of AKT1 by regulating the levels of PIP3 level in MSCs and preadipocyte cells. Required for hair bundle maturation, a process that enables hair cells to detect and transmit sound and balance signals effectively, therefore affecting auditory function. May act by regulating the level of phosphatidylinositol 4,5-bisphosphate (PIP2) level in the basal region of hair bundles. The sequence is that of Phosphatidylinositol phosphatase PTPRQ (Ptprq) from Rattus norvegicus (Rat).